The sequence spans 155 residues: SsrA-binding protein (155 aa).

Belongs to the SmpB family.

It is found in the cytoplasm. In terms of biological role, required for rescue of stalled ribosomes mediated by trans-translation. Binds to transfer-messenger RNA (tmRNA), required for stable association of tmRNA with ribosomes. tmRNA and SmpB together mimic tRNA shape, replacing the anticodon stem-loop with SmpB. tmRNA is encoded by the ssrA gene; the 2 termini fold to resemble tRNA(Ala) and it encodes a 'tag peptide', a short internal open reading frame. During trans-translation Ala-aminoacylated tmRNA acts like a tRNA, entering the A-site of stalled ribosomes, displacing the stalled mRNA. The ribosome then switches to translate the ORF on the tmRNA; the nascent peptide is terminated with the 'tag peptide' encoded by the tmRNA and targeted for degradation. The ribosome is freed to recommence translation, which seems to be the essential function of trans-translation. The polypeptide is SsrA-binding protein (Streptococcus pyogenes serotype M5 (strain Manfredo)).